The primary structure comprises 372 residues: tRNA-specific 2-thiouridylase MnmA (372 aa).

Residues 16-23 (GMSGGVDS) and Met-42 contribute to the ATP site. An interaction with target base in tRNA region spans residues 102-104 (NPD). Cys-107 (nucleophile) is an active-site residue. Residues Cys-107 and Cys-205 are joined by a disulfide bond. Gly-132 lines the ATP pocket. The tract at residues 155–157 (KDQ) is interaction with tRNA. Residue Cys-205 is the Cysteine persulfide intermediate of the active site. The segment at 317-318 (RY) is interaction with tRNA.

The protein belongs to the MnmA/TRMU family.

Its subcellular location is the cytoplasm. It catalyses the reaction S-sulfanyl-L-cysteinyl-[protein] + uridine(34) in tRNA + AH2 + ATP = 2-thiouridine(34) in tRNA + L-cysteinyl-[protein] + A + AMP + diphosphate + H(+). Functionally, catalyzes the 2-thiolation of uridine at the wobble position (U34) of tRNA, leading to the formation of s(2)U34. This Shewanella baltica (strain OS223) protein is tRNA-specific 2-thiouridylase MnmA.